A 415-amino-acid chain; its full sequence is Alditol oxidase (415 aa).

One can recognise an FAD-binding PCMH-type domain in the interval 12–179 (ITYTAKEVHR…TALTLDLEPA (168 aa)). Position 46 is a pros-8alpha-FAD histidine (His46). FAD is bound by residues Ser106, Ser111, Gly114, 118 to 121 (TGTH), and Val169. Residue Ser106 coordinates xylitol. Residues Glu317, Arg319, and Thr342 each contribute to the xylitol site. FAD is bound at residue Arg319. His369 contacts FAD. Lys372 provides a ligand contact to xylitol.

It belongs to the oxygen-dependent FAD-linked oxidoreductase family. As to quaternary structure, monomer. FAD is required as a cofactor.

The catalysed reaction is an alditol + O2 = an aldose + H2O2. The enzyme catalyses xylitol + O2 = D-xylose + H2O2. It carries out the reaction D-sorbitol + O2 = D-glucose + H2O2. Oxidase that performs selective oxidation of the terminal primary hydroxyl group of several alditols, with a reduction of O2 to H2O2. Shows highest activity on xylitol and D-sorbitol, and to a lesser extent, can also use galactitol, D-mannitol, and D-arabitol as substrates in vitro. Is not active on D-glucose, D-xylose, D-galactose, D-mannose, D-fructose, L-sorbose, L-fucose, myoinositol, glycerol, ethyl alcohol, and meso-erythritol. This chain is Alditol oxidase, found in Streptomyces sp. (strain IKD472 / FERM P-14339).